The chain runs to 139 residues: Actin-depolymerizing factor 3 (139 aa).

Residues 5-139 form the ADF-H domain; it reads ASGMAVHDDC…DLDVFKSRAN (135 aa). At serine 6 the chain carries Phosphoserine.

Belongs to the actin-binding proteins ADF family.

It is found in the cytoplasm. The protein localises to the cytoskeleton. Actin-depolymerizing protein. Severs actin filaments (F-actin) and binds to actin monomers. This chain is Actin-depolymerizing factor 3 (ADF3), found in Arabidopsis thaliana (Mouse-ear cress).